We begin with the raw amino-acid sequence, 261 residues long: Leucine-rich repeat-containing protein 18 (261 aa).

7 LRR repeats span residues 28–49, 51–72, 74–95, 97–118, 122–144, 145–167, and 168–189; these read GKKR…ILRL, DMDE…ISKF, NLRW…IGQM, SLLY…VELK, NIRA…GALK, ELHE…SKLP, and KLKK…EIFI.

The protein localises to the cytoplasm. In terms of biological role, may be involved in the regulation of spermatogenesis and sperm maturation. This chain is Leucine-rich repeat-containing protein 18 (LRRC18), found in Homo sapiens (Human).